A 313-amino-acid polypeptide reads, in one-letter code: MFNNPDFSDIATCDLEEPKNSIKIEREQVKLEKRLCREVGRAITDFNMIEEGDKIMVCMSGGKDSYTMLDVLRKLQKRAPVKFELVAVNLDQKQPGFPDHVLPEYFKSIGVDYHIETQDTYSVVKRVVPEGKTTCGLCSRLRRAILYKVADELGCTKVALGHHRDDIVQTLMLNMFYGGRMKGMPPKLVSDDGKHVVIRPLCYVPEKDTVRWAQYQNFPIIPCNLCGSQDGLQRVAVGELLREWDKKFPGRVESMFRAMGHIVTTHMMDPELHDFKNAKATGIADPNGDMAFDHEEMPVSASLPGLQVVQLSS.

Positions S60 to S65 match the PP-loop motif motif. [4Fe-4S] cluster contacts are provided by C135, C138, and C226.

The protein belongs to the TtcA family. In terms of assembly, homodimer. Requires Mg(2+) as cofactor. It depends on [4Fe-4S] cluster as a cofactor.

It is found in the cytoplasm. The enzyme catalyses cytidine(32) in tRNA + S-sulfanyl-L-cysteinyl-[cysteine desulfurase] + AH2 + ATP = 2-thiocytidine(32) in tRNA + L-cysteinyl-[cysteine desulfurase] + A + AMP + diphosphate + H(+). The protein operates within tRNA modification. Functionally, catalyzes the ATP-dependent 2-thiolation of cytidine in position 32 of tRNA, to form 2-thiocytidine (s(2)C32). The sulfur atoms are provided by the cysteine/cysteine desulfurase (IscS) system. The sequence is that of tRNA-cytidine(32) 2-sulfurtransferase from Delftia acidovorans (strain DSM 14801 / SPH-1).